The primary structure comprises 638 residues: Nitrous-oxide reductase (638 aa).

Positions 1 to 52 (MSDKDSKNTPQVPEKLGLSRRGFLGASAVTGAAVAATALGGAVMTRESWAQA) form a signal peptide, tat-type signal. His-129, His-130, and His-178 together coordinate Cu cation. Residues Tyr-256, Glu-259, Met-267, Asp-273, and Asn-324 each contribute to the Ca(2+) site. Residues His-326, His-382, and His-433 each coordinate Cu cation. Ca(2+)-binding residues include Lys-454 and Glu-469. Cu cation is bound by residues His-494, His-583, Cys-618, Trp-620, Cys-622, His-626, and Met-629. Residues 542–638 (NKVRVYMTSM…MVGRMMVEPA (97 aa)) form a COX2-like region.

This sequence belongs to the NosZ family. In the C-terminal section; belongs to the cytochrome c oxidase subunit 2 family. Homodimer. The cofactor is Ca(2+). Requires Cu cation as cofactor. Post-translationally, predicted to be exported by the Tat system. The position of the signal peptide cleavage has not been experimentally proven. The N-terminus is blocked.

The protein resides in the periplasm. It carries out the reaction N2 + 2 Fe(III)-[cytochrome c] + H2O = nitrous oxide + 2 Fe(II)-[cytochrome c] + 2 H(+). It functions in the pathway nitrogen metabolism; nitrate reduction (denitrification); dinitrogen from nitrate: step 4/4. In terms of biological role, nitrous-oxide reductase is part of a bacterial respiratory system which is activated under anaerobic conditions in the presence of nitrate or nitrous oxide. This Stutzerimonas stutzeri (Pseudomonas stutzeri) protein is Nitrous-oxide reductase (nosZ).